We begin with the raw amino-acid sequence, 658 residues long: Cysteine-rich receptor-like protein kinase 14 (658 aa).

Positions 1–22 (MELKNLFPIFWFVLVGFAVVSA) are cleaved as a signal peptide. 2 Gnk2-homologous domains span residues 23–125 (QECG…NSSF) and 131–240 (AEPH…LFPF). Residues 23–277 (QECGKTGFFV…ATKKGSITIS (255 aa)) lie on the Extracellular side of the membrane. Asn51, Asn60, Asn102, Asn122, and Asn146 each carry an N-linked (GlcNAc...) asparagine glycan. Residues 278 to 298 (IGIVWAIIIPTVIVVFLVLLA) form a helical membrane-spanning segment. At 299–658 (LGFVVYRRRK…DVTITDFEPR (360 aa)) the chain is on the cytoplasmic side. A Protein kinase domain is found at 337–614 (FSESNIIGRG…NMMLINNSYV (278 aa)). ATP is bound by residues 343 to 351 (IGRGGFGEV) and Lys364. Tyr409 is subject to Phosphotyrosine. The Proton acceptor role is filled by Asp461. A Phosphoserine modification is found at Ser465. At Thr501 the chain carries Phosphothreonine. Residue Tyr509 is modified to Phosphotyrosine.

It belongs to the protein kinase superfamily. Ser/Thr protein kinase family. CRK subfamily.

It is found in the membrane. It catalyses the reaction L-seryl-[protein] + ATP = O-phospho-L-seryl-[protein] + ADP + H(+). The enzyme catalyses L-threonyl-[protein] + ATP = O-phospho-L-threonyl-[protein] + ADP + H(+). The polypeptide is Cysteine-rich receptor-like protein kinase 14 (CRK14) (Arabidopsis thaliana (Mouse-ear cress)).